The chain runs to 57 residues: DNA gyrase inhibitor YacG (57 aa).

Positions 10, 13, 25, and 29 each coordinate Zn(2+).

The protein belongs to the DNA gyrase inhibitor YacG family. Interacts with GyrB. Requires Zn(2+) as cofactor.

Its function is as follows. Inhibits all the catalytic activities of DNA gyrase by preventing its interaction with DNA. Acts by binding directly to the C-terminal domain of GyrB, which probably disrupts DNA binding by the gyrase. The sequence is that of DNA gyrase inhibitor YacG from Brucella melitensis biotype 1 (strain ATCC 23456 / CCUG 17765 / NCTC 10094 / 16M).